Reading from the N-terminus, the 309-residue chain is HPr kinase/phosphorylase (309 aa).

Residues His138 and Lys159 contribute to the active site. 153-160 (GQSGVGKS) is an ATP binding site. Residue Ser160 participates in Mg(2+) binding. The active-site Proton acceptor; for phosphorylation activity. Proton donor; for dephosphorylation activity is Asp177. The tract at residues 201 to 210 (LEIRGLGIIN) is important for the catalytic mechanism of both phosphorylation and dephosphorylation. Position 202 (Glu202) interacts with Mg(2+). Residue Arg243 is part of the active site. The segment at 264-269 (PVRPGR) is important for the catalytic mechanism of dephosphorylation.

The protein belongs to the HPrK/P family. As to quaternary structure, homohexamer. Mg(2+) serves as cofactor.

The catalysed reaction is [HPr protein]-L-serine + ATP = [HPr protein]-O-phospho-L-serine + ADP + H(+). It carries out the reaction [HPr protein]-O-phospho-L-serine + phosphate + H(+) = [HPr protein]-L-serine + diphosphate. In terms of biological role, catalyzes the ATP- as well as the pyrophosphate-dependent phosphorylation of a specific serine residue in HPr, a phosphocarrier protein of the phosphoenolpyruvate-dependent sugar phosphotransferase system (PTS). HprK/P also catalyzes the pyrophosphate-producing, inorganic phosphate-dependent dephosphorylation (phosphorolysis) of seryl-phosphorylated HPr (P-Ser-HPr). The two antagonistic activities of HprK/P are regulated by several intracellular metabolites, which change their concentration in response to the absence or presence of rapidly metabolisable carbon sources (glucose, fructose, etc.) in the growth medium. Also phosphorylates/dephosphorylates the HPr-like catabolite repression protein crh on a specific serine residue. Therefore, by controlling the phosphorylation state of HPr and crh, HPrK/P is a sensor enzyme that plays a major role in the regulation of carbon metabolism and sugar transport: it mediates carbon catabolite repression (CCR), and regulates PTS-catalyzed carbohydrate uptake and inducer exclusion. This chain is HPr kinase/phosphorylase, found in Bacillus mycoides (strain KBAB4) (Bacillus weihenstephanensis).